The chain runs to 185 residues: Ubiquitin-conjugating enzyme E2 5 (185 aa).

Residues 1–148 (MSSPSKRREM…VKEYCEKYAK (148 aa)) enclose the UBC core domain. The Glycyl thioester intermediate role is filled by Cys-85. The tract at residues 146 to 185 (YAKPRADTEEMSSDDEMSEDEYASDGDDEDDVAIAGKLDP) is disordered. A compositionally biased stretch (acidic residues) spans 154–177 (EEMSSDDEMSEDEYASDGDDEDDV).

The protein belongs to the ubiquitin-conjugating enzyme family. In terms of tissue distribution, expressed in developing ovules, but not in vascular tissues.

It catalyses the reaction S-ubiquitinyl-[E1 ubiquitin-activating enzyme]-L-cysteine + [E2 ubiquitin-conjugating enzyme]-L-cysteine = [E1 ubiquitin-activating enzyme]-L-cysteine + S-ubiquitinyl-[E2 ubiquitin-conjugating enzyme]-L-cysteine.. It functions in the pathway protein modification; protein ubiquitination. In terms of biological role, accepts the ubiquitin from the E1 complex and catalyzes its covalent attachment to other proteins. This is Ubiquitin-conjugating enzyme E2 5 (UBC5) from Arabidopsis thaliana (Mouse-ear cress).